A 697-amino-acid chain; its full sequence is Potassium-transporting ATPase ATP-binding subunit (697 aa).

4 helical membrane-spanning segments follow: residues 55–75 (PIMF…FLPS), 79–99 (SIPG…VLFA), 245–265 (LTLI…YLGF), and 271–291 (VLVA…LSAI). Residue Asp324 is the 4-aspartylphosphate intermediate of the active site. Residues Asp361, Glu365, 393-400 (FKAETRMS), and Lys412 each bind ATP. Asp535 and Asp539 together coordinate Mg(2+). Transmembrane regions (helical) follow at residues 605–625 (FAII…LNIM), 633–653 (AILS…PLAM), and 677–697 (GGVI…GLFI).

It belongs to the cation transport ATPase (P-type) (TC 3.A.3) family. Type IA subfamily. As to quaternary structure, the system is composed of three essential subunits: KdpA, KdpB and KdpC.

It localises to the cell membrane. The enzyme catalyses K(+)(out) + ATP + H2O = K(+)(in) + ADP + phosphate + H(+). In terms of biological role, part of the high-affinity ATP-driven potassium transport (or Kdp) system, which catalyzes the hydrolysis of ATP coupled with the electrogenic transport of potassium into the cytoplasm. This subunit is responsible for energy coupling to the transport system and for the release of the potassium ions to the cytoplasm. The polypeptide is Potassium-transporting ATPase ATP-binding subunit (Bacillus cereus (strain ATCC 14579 / DSM 31 / CCUG 7414 / JCM 2152 / NBRC 15305 / NCIMB 9373 / NCTC 2599 / NRRL B-3711)).